The chain runs to 500 residues: L-arabinose isomerase (500 aa).

Residues glutamate 306, glutamate 333, histidine 350, and histidine 450 each coordinate Mn(2+).

It belongs to the arabinose isomerase family. Homohexamer. Requires Mn(2+) as cofactor.

It carries out the reaction beta-L-arabinopyranose = L-ribulose. It participates in carbohydrate degradation; L-arabinose degradation via L-ribulose; D-xylulose 5-phosphate from L-arabinose (bacterial route): step 1/3. Catalyzes the conversion of L-arabinose to L-ribulose. This is L-arabinose isomerase from Salmonella enteritidis PT4 (strain P125109).